A 509-amino-acid polypeptide reads, in one-letter code: FAD-linked oxidoreductase anuG (509 aa).

A signal peptide spans 1–21 (MVQISNVWGFGLAIMASLAAA). The 172-residue stretch at 75–246 (YAAPKFTVVV…TSFEMSIYPT (172 aa)) folds into the FAD-binding PCMH-type domain.

This sequence belongs to the oxygen-dependent FAD-linked oxidoreductase family. Requires FAD as cofactor.

It catalyses the reaction (2S,9S)-annullatin H + 2 A = (2S,9S)-annullatin D + 2 AH2. The protein operates within secondary metabolite biosynthesis. Its function is as follows. Cytochrome P450 monooxygenase; part of the gene cluster that mediates the biosynthesis of annullatin D, an alkylated aromatic polyketide with a fused dihydrobenzofuran lactone ring system that exhibits potent agonistic activities toward the cannabinoid receptors. Within the pathway, anuG is responsible for the five-member lactone ring formation in (2S, 9S)-annullatin D via oxidative lactonization between the two hydroxyl groups. The annullatin backbone 2-hydroxymethyl-3-pentylphenol is assembled from one acetyl-CoA starter unit and 5 malonyl-CoA elongation units by cooperation of the highly reducing polyketide synthase anuA, the short-chain dehydrogenase anuB and the oxidoreductase anuC, before being hydroxylated at the C-5 alkyl chain by the cytochrome P450 monooxygenase anuE to form (8S)-annullatin E. The prenyltransferase anuH subsequently installs one isoprenyl group at the benzene ring to form (8S)-annullatin J. Enzymatic or nonenzymatic dihydro-benzofuran ring formation between the prenyl and the phenolic hydroxyl groups in (8S)-annullatin J results in two diastereomers (2S,9S)-annullatin H and compound 12. The intermediate (2S,9S)-annullatin H is then converted to (2S,9S)-annullatin D by the FAD-linked oxidoreductase anuG-catalyzed five-member lactone ring formation. The isomer 12 acts as a substrate for the short-chain dehydrogenase anuF and is oxidized to (2R)-annullatin F, which is subsequently acetylated by an acetyltransferase leading to (2R)-annullatin G formation. The remaining enzymes identified within the cluster, anuD, anuI and anuJ, seem not to be involved in annullatin biosynthesis. This chain is FAD-linked oxidoreductase anuG, found in Penicillium roqueforti (strain FM164).